The sequence spans 212 residues: Ribosomal RNA small subunit methyltransferase G (212 aa).

S-adenosyl-L-methionine-binding positions include G73, F78, 96-98 (ESS), 124-125 (VE), and R141.

It belongs to the methyltransferase superfamily. RNA methyltransferase RsmG family.

Its subcellular location is the cytoplasm. In terms of biological role, specifically methylates the N7 position of a guanine in 16S rRNA. This Aster yellows witches'-broom phytoplasma (strain AYWB) protein is Ribosomal RNA small subunit methyltransferase G.